The primary structure comprises 245 residues: Nucleoprotein (245 aa).

The RNA site is built by tyrosine 30, lysine 67, arginine 106, arginine 186, and serine 196.

It belongs to the phlebovirus nucleocapsid protein family. Homodimer. Homohexamer; ring-shaped, necessary to form the nucleocapsid. Homopentamers; opened pentamers in solution. Binds to viral genomic RNA. Interacts with glycoprotein Gn; this interaction allows packaging of nucleocapsids into virions.

Its subcellular location is the virion. The protein localises to the host cytoplasm. It is found in the host nucleus. The protein resides in the host endoplasmic reticulum-Golgi intermediate compartment. It localises to the host Golgi apparatus. Functionally, encapsidates the genomic RNA, protecting it from nucleases. Displays high affinity for single-stranded nucleic acid. The encapsidated genomic RNA is termed the nucleocapsid (NC) or ribonucleoprotein. The ribonucleoprotein has a non-helical structure. Serves as template for viral transcription and replication. After replication, the nucleocapsid is recruited to the host Golgi apparatus by glycoprotein Gn for packaging into virus particles. This is Nucleoprotein (NP) from Dabie bandavirus (Severe fever with thrombocytopenia virus).